Reading from the N-terminus, the 140-residue chain is Large ribosomal subunit protein uL16 (140 aa).

It belongs to the universal ribosomal protein uL16 family. Part of the 50S ribosomal subunit.

Its function is as follows. Binds 23S rRNA and is also seen to make contacts with the A and possibly P site tRNAs. This chain is Large ribosomal subunit protein uL16, found in Citrifermentans bemidjiense (strain ATCC BAA-1014 / DSM 16622 / JCM 12645 / Bem) (Geobacter bemidjiensis).